Reading from the N-terminus, the 209-residue chain is Thymidylate kinase (209 aa).

10–17 is an ATP binding site; sequence GIDGCGKT.

This sequence belongs to the thymidylate kinase family.

It catalyses the reaction dTMP + ATP = dTDP + ADP. Its function is as follows. Phosphorylation of dTMP to form dTDP in both de novo and salvage pathways of dTTP synthesis. The polypeptide is Thymidylate kinase (Synechococcus sp. (strain CC9605)).